A 176-amino-acid chain; its full sequence is Inorganic pyrophosphatase (176 aa).

The substrate site is built by Lys-30, Arg-44, and Tyr-56. Residues Asp-66, Asp-71, and Asp-103 each coordinate Mg(2+). Tyr-142 is a substrate binding site.

It belongs to the PPase family. As to quaternary structure, homohexamer. Mg(2+) is required as a cofactor.

It is found in the cytoplasm. It catalyses the reaction diphosphate + H2O = 2 phosphate + H(+). Its function is as follows. Catalyzes the hydrolysis of inorganic pyrophosphate (PPi) forming two phosphate ions. In Vibrio parahaemolyticus serotype O3:K6 (strain RIMD 2210633), this protein is Inorganic pyrophosphatase.